The following is a 218-amino-acid chain: Small ribosomal subunit protein uS5 (218 aa).

Residues 1-10 (MTQATNQTPG) show a composition bias toward polar residues. The segment at 1–63 (MTQATNQTPG…GRDERDSEWQ (63 aa)) is disordered. The segment covering 11 to 25 (QDVPGAADVPAAAEG) has biased composition (low complexity). Residues 31–63 (GERRGGGGGRGGDRRGRGDRRGRGRDERDSEWQ) are compositionally biased toward basic and acidic residues. The region spanning 62–125 (WQERVIQIRR…ADGKKHLVKV (64 aa)) is the S5 DRBM domain.

It belongs to the universal ribosomal protein uS5 family. In terms of assembly, part of the 30S ribosomal subunit. Contacts proteins S4 and S8.

In terms of biological role, with S4 and S12 plays an important role in translational accuracy. Functionally, located at the back of the 30S subunit body where it stabilizes the conformation of the head with respect to the body. In Synechococcus sp. (strain RCC307), this protein is Small ribosomal subunit protein uS5.